Reading from the N-terminus, the 228-residue chain is 5'(3')-deoxyribonucleotidase, mitochondrial (228 aa).

The transit peptide at 1–31 (MIRLGGWCARRLCSAAVPAGRRGAAGGLGLA) directs the protein to the mitochondrion. The active-site Nucleophile is Asp41. The Mg(2+) site is built by Asp41 and Asp43. Asp43 serves as the catalytic Proton donor. Substrate is bound by residues Asp43, Phe49, Phe75, Trp76, Val77, Trp96, Thr130, and Lys165. A Mg(2+)-binding site is contributed by Asp176.

This sequence belongs to the 5'(3')-deoxyribonucleotidase family. Homodimer. Mg(2+) is required as a cofactor. Highly expressed in heart, brain and skeletal muscle. Detected at very low levels in kidney and pancreas.

It localises to the mitochondrion. Dephosphorylates specifically the 5' and 2'(3')-phosphates of uracil and thymine deoxyribonucleotides, and so protects mitochondrial DNA replication from excess dTTP. Has only marginal activity towards dIMP and dGMP. The protein is 5'(3')-deoxyribonucleotidase, mitochondrial (NT5M) of Homo sapiens (Human).